Consider the following 202-residue polypeptide: Thymidine kinase (202 aa).

Residues 16-23 and 99-102 each bind ATP; these read GPMFSGKS and DEVQ. The active-site Proton acceptor is the Glu100. Positions 156, 159, 194, and 197 each coordinate Zn(2+).

It belongs to the thymidine kinase family. As to quaternary structure, homotetramer.

It is found in the cytoplasm. The enzyme catalyses thymidine + ATP = dTMP + ADP + H(+). In Deinococcus deserti (strain DSM 17065 / CIP 109153 / LMG 22923 / VCD115), this protein is Thymidine kinase.